The primary structure comprises 212 residues: Mediator of RNA polymerase II transcription subunit 20 (212 aa).

The protein belongs to the Mediator complex subunit 20 family. In terms of assembly, component of the Mediator complex, which is composed of MED1, MED4, MED6, MED7, MED8, MED9, MED10, MED11, MED12, MED13, MED13L, MED14, MED15, MED16, MED17, MED18, MED19, MED20, MED21, MED22, MED23, MED24, MED25, MED26, MED27, MED29, MED30, MED31, CCNC, CDK8 and CDC2L6/CDK11. The MED12, MED13, CCNC and CDK8 subunits form a distinct module termed the CDK8 module. Mediator containing the CDK8 module is less active than Mediator lacking this module in supporting transcriptional activation. Individual preparations of the Mediator complex lacking one or more distinct subunits have been variously termed ARC, CRSP, DRIP, PC2, SMCC and TRAP. Interacts with PPARG.

It is found in the nucleus. Functionally, component of the Mediator complex, a coactivator involved in the regulated transcription of nearly all RNA polymerase II-dependent genes. Mediator functions as a bridge to convey information from gene-specific regulatory proteins to the basal RNA polymerase II transcription machinery. Mediator is recruited to promoters by direct interactions with regulatory proteins and serves as a scaffold for the assembly of a functional preinitiation complex with RNA polymerase II and the general transcription factors. The polypeptide is Mediator of RNA polymerase II transcription subunit 20 (Med20) (Rattus norvegicus (Rat)).